A 241-amino-acid chain; its full sequence is Isoprenyl transferase (241 aa).

Residue D17 is part of the active site. A Mg(2+)-binding site is contributed by D17. Substrate contacts are provided by residues 18–21, W22, R30, H34, and 62–64; these read GNGR and STE. N65 functions as the Proton acceptor in the catalytic mechanism. Residues W66, R68, R186, and 192-194 each bind substrate; that span reads RLS. E205 provides a ligand contact to Mg(2+).

This sequence belongs to the UPP synthase family. Homodimer. Mg(2+) is required as a cofactor.

In terms of biological role, catalyzes the condensation of isopentenyl diphosphate (IPP) with allylic pyrophosphates generating different type of terpenoids. This is Isoprenyl transferase from Leptospira interrogans serogroup Icterohaemorrhagiae serovar copenhageni (strain Fiocruz L1-130).